The chain runs to 126 residues: Small ribosomal subunit protein uS13 (126 aa).

The tract at residues 95-126 (GLPVRGQRTRTNARTRKGPRKTVAGKKKAPRK) is disordered.

This sequence belongs to the universal ribosomal protein uS13 family. In terms of assembly, part of the 30S ribosomal subunit. Forms a loose heterodimer with protein S19. Forms two bridges to the 50S subunit in the 70S ribosome.

Its function is as follows. Located at the top of the head of the 30S subunit, it contacts several helices of the 16S rRNA. In the 70S ribosome it contacts the 23S rRNA (bridge B1a) and protein L5 of the 50S subunit (bridge B1b), connecting the 2 subunits; these bridges are implicated in subunit movement. Contacts the tRNAs in the A and P-sites. This chain is Small ribosomal subunit protein uS13 (rpsM), found in Thermus thermophilus (strain ATCC BAA-163 / DSM 7039 / HB27).